The following is a 457-amino-acid chain: Multidrug resistance protein MdtK (457 aa).

12 consecutive transmembrane segments (helical) span residues Leu11 to Val31, Ile53 to Ala73, Trp93 to Ile113, Ala127 to Ala147, Gly160 to Tyr180, Leu188 to Met208, Leu243 to Val263, Ile276 to Thr296, Ala314 to Val334, Val350 to Ile370, Ile387 to Ala407, and Pro418 to Leu438.

The protein belongs to the multi antimicrobial extrusion (MATE) (TC 2.A.66.1) family. MdtK subfamily.

The protein localises to the cell inner membrane. Its function is as follows. Multidrug efflux pump that functions probably as a Na(+)/drug antiporter. In Salmonella enteritidis PT4 (strain P125109), this protein is Multidrug resistance protein MdtK.